The sequence spans 168 residues: Putative peroxiredoxin prxA (168 aa).

The 155-residue stretch at 4–158 (LKAGDSFPAD…LEPAKNHLEF (155 aa)) folds into the Thioredoxin domain. Cys-61 acts as the Cysteine sulfenic acid (-SOH) intermediate in catalysis.

This sequence belongs to the peroxiredoxin family. Prx5 subfamily. In terms of assembly, homodimer; disulfide-linked, upon oxidation. Interacts with thioredoxin trxA.

It catalyses the reaction a hydroperoxide + [thioredoxin]-dithiol = an alcohol + [thioredoxin]-disulfide + H2O. In terms of biological role, thiol-specific peroxidase that catalyzes the reduction of hydrogen peroxide and organic hydroperoxides to water and alcohols, respectively. Plays a role in cell protection against oxidative stress by detoxifying peroxides and as sensor of hydrogen peroxide-mediated signaling events. Involved in osmoadaptation. This Emericella nidulans (strain FGSC A4 / ATCC 38163 / CBS 112.46 / NRRL 194 / M139) (Aspergillus nidulans) protein is Putative peroxiredoxin prxA.